We begin with the raw amino-acid sequence, 103 residues long: UPF0235 protein RHECIAT_CH0004196 (103 aa).

This sequence belongs to the UPF0235 family.

The protein is UPF0235 protein RHECIAT_CH0004196 of Rhizobium etli (strain CIAT 652).